A 409-amino-acid chain; its full sequence is Phosphoserine phosphatase SerB2 (409 aa).

2 consecutive ACT domains span residues 8 to 86 (LITV…RSDD) and 102 to 174 (GRPI…DYGL). D185 (nucleophile) is an active-site residue. Mg(2+) is bound by residues D185 and D187. Catalysis depends on D187, which acts as the Proton donor. Residues E194, R230, 273-274 (SG), and K318 contribute to the substrate site. D341 contributes to the Mg(2+) binding site. A substrate-binding site is contributed by N344.

This sequence belongs to the HAD-like hydrolase superfamily. SerB family. Homodimer. The dimeric population shifts to a tetramer in the presence of L-serine, which inactivates the enzyme. Mg(2+) serves as cofactor. The cofactor is Mn(2+).

Its subcellular location is the secreted. The protein localises to the host cytoplasm. It localises to the host cytosol. It carries out the reaction O-phospho-L-serine + H2O = L-serine + phosphate. It catalyses the reaction O-phospho-D-serine + H2O = D-serine + phosphate. The catalysed reaction is O-phospho-L-seryl-[protein] + H2O = L-seryl-[protein] + phosphate. The enzyme catalyses O-phospho-L-threonyl-[protein] + H2O = L-threonyl-[protein] + phosphate. The protein operates within amino-acid biosynthesis; L-serine biosynthesis; L-serine from 3-phospho-D-glycerate: step 3/3. Clofazimine, a drug being evaluated for XDR and MDR tuberculosis, inhibits SerB2 phosphatase activity and reverses the various functional effects described above and interactions with host proteins. Is inhibited by known PSP inhibitors such as chlorpromazine, DL-AP3 and sodium orthovanadate, but not by okadaic acid. By binding to the ACT domains, amino-acids have various effects on enzyme activity: L-serine and L-glycine act as inhibitors, whereas L-lysine, L-tyrosine and L-phenylalanine are activators. High throughput screen has been performed to identify specific PSP inhibitors with activity against intracellular bacteria; the two best hits identified in this screen, clorobiocin and rosaniline, are bactericidal and kill bacteria in infected macrophages in a dose-dependent manner. Its function is as follows. Catalyzes the dephosphorylation of O-phospho-L-serine into L-serine, a step in the L-serine biosynthetic pathway. Exhibits high specificity for L-phosphoserine compared to substrates like L-phosphothreonine (5% relative activity) and L-phosphotyrosine (1.7% relative activity). In the host, induces significant cytoskeleton rearrangements through cofilin dephosphorylation and its subsequent activation, and affects the expression of genes that regulate actin dynamics. It specifically interacts with HSP90, HSP70 and HSP27 that block apoptotic pathways but not with other HSPs. Also interacts with GAPDH. It actively dephosphorylates MAP kinase p38 and NF-kappa B p65 (specifically at Ser-536) that play crucial roles in inflammatory and immune responses. This in turn leads to down-regulation of Interleukin 8, a chemotactic and inflammatory cytokine. Thus might help the pathogen to evade the host's immune response. Exogenous addition of purified SerB2 protein to human THP-1 cells (that can be differentiated into macrophage-like cells) induces microtubule rearrangements; the phosphatase activity is co-related to the elicited rearrangements, while addition of the ACT-domains alone elicits no rearrangements. The protein is Phosphoserine phosphatase SerB2 of Mycobacterium tuberculosis (strain ATCC 25618 / H37Rv).